The primary structure comprises 500 residues: Organic cation/carnitine transporter 7 (500 aa).

Residues 1-23 (MADGNTRFTVDEALVAMGFGKFQ) lie on the Cytoplasmic side of the membrane. The chain crosses the membrane as a helical span at residues 24-44 (IYVLAYAGMGWVAEAMEMMLL). The Extracellular segment spans residues 45-62 (SFVGPAVQSLWNLSARQE). Asparagine 56 carries N-linked (GlcNAc...) asparagine glycosylation. The helical transmembrane segment at 63-83 (SLITSVVFAGMLIGAYSWGIV) threads the bilayer. Over 84–97 (SDKHGRRKGFIITA) the chain is Cytoplasmic. Residues 98–118 (VVTFVAGFLSAFSPNYMWLII) form a helical membrane-spanning segment. Topologically, residues 119-120 (LR) are extracellular. A helical transmembrane segment spans residues 121–141 (CLVGLGLGGGPVLASWYLEFI). 137–144 (YLEFIPAP) provides a ligand contact to ATP. At 142–150 (PAPSRGTWM) the chain is on the cytoplasmic side. The helical transmembrane segment at 151–171 (VVFSAFWTVGTIFEASLAWLV) threads the bilayer. Over 172-174 (MPR) the chain is Extracellular. Residues 175-195 (LGWRWLLAFSSVPSSLLLLFY) form a helical membrane-spanning segment. Over 196 to 293 (RWTSESPRYL…ALLSPTLMKR (98 aa)) the chain is Cytoplasmic. A helical transmembrane segment spans residues 294–314 (TLLLWVVFFGNAFAYYGVVLL). Topologically, residues 315 to 341 (TTELNNSHNRCYPTEKQLRNSNDVNYR) are extracellular. The N-linked (GlcNAc...) asparagine glycan is linked to asparagine 319. A helical membrane pass occupies residues 342-362 (DVFIASFAEFPGLLISAAMVD). At 363 to 367 (RLGRK) the chain is on the cytoplasmic side. Residues 368–387 (ASMASMLFTCCIFLLPLLSH) form a helical membrane-spanning segment. At 388 to 401 (QSPFITTVLLFGGR) the chain is on the extracellular side. A helical transmembrane segment spans residues 402 to 422 (ICISAAFTVVYIYAPEIYPTA). The Cytoplasmic segment spans residues 423-429 (VRTTGVG). Residues 430–450 (VGSSVGRIGGILCPLVAVGLV) traverse the membrane as a helical segment. The Extracellular segment spans residues 451–456 (HGCHQT). Residues 457–477 (IAVLLFEVVILVSGICVCLFP) traverse the membrane as a helical segment. Topologically, residues 478-500 (FETSGRDLTDSISASKEPPSASV) are cytoplasmic.

It belongs to the major facilitator (TC 2.A.1) superfamily. Organic cation transporter (TC 2.A.1.19) family. Expressed in pollen.

The protein localises to the membrane. In terms of biological role, high affinity carnitine transporter involved in the active cellular uptake of carnitine. Also transports organic cations. The polypeptide is Organic cation/carnitine transporter 7 (OCT7) (Arabidopsis thaliana (Mouse-ear cress)).